Consider the following 241-residue polypeptide: 2-C-methyl-D-erythritol 4-phosphate cytidylyltransferase (241 aa).

It belongs to the IspD/TarI cytidylyltransferase family. IspD subfamily.

It carries out the reaction 2-C-methyl-D-erythritol 4-phosphate + CTP + H(+) = 4-CDP-2-C-methyl-D-erythritol + diphosphate. It participates in isoprenoid biosynthesis; isopentenyl diphosphate biosynthesis via DXP pathway; isopentenyl diphosphate from 1-deoxy-D-xylulose 5-phosphate: step 2/6. In terms of biological role, catalyzes the formation of 4-diphosphocytidyl-2-C-methyl-D-erythritol from CTP and 2-C-methyl-D-erythritol 4-phosphate (MEP). This Alkaliphilus metalliredigens (strain QYMF) protein is 2-C-methyl-D-erythritol 4-phosphate cytidylyltransferase.